A 326-amino-acid polypeptide reads, in one-letter code: Ribosomal RNA small subunit methyltransferase H (326 aa).

Residues 45–47, D65, D113, and Q120 each bind S-adenosyl-L-methionine; that span reads GGH. Positions 299-326 are disordered; that stretch reads PSAEEITRNPRSRSARLRAAERIAHDGR. The span at 316-326 shows a compositional bias: basic and acidic residues; it reads RAAERIAHDGR.

This sequence belongs to the methyltransferase superfamily. RsmH family.

The protein localises to the cytoplasm. The catalysed reaction is cytidine(1402) in 16S rRNA + S-adenosyl-L-methionine = N(4)-methylcytidine(1402) in 16S rRNA + S-adenosyl-L-homocysteine + H(+). Functionally, specifically methylates the N4 position of cytidine in position 1402 (C1402) of 16S rRNA. The protein is Ribosomal RNA small subunit methyltransferase H of Thermomicrobium roseum (strain ATCC 27502 / DSM 5159 / P-2).